Reading from the N-terminus, the 341-residue chain is Thymidine kinase (341 aa).

Residue 19 to 26 (GAYGIGKT) participates in ATP binding. Glutamate 48 functions as the Proton acceptor in the catalytic mechanism. Substrate is bound by residues tyrosine 66 and glutamine 90. Arginine 183 is a binding site for ATP. Arginine 189 contacts substrate.

It belongs to the herpesviridae thymidine kinase family. As to quaternary structure, homodimer.

It carries out the reaction thymidine + ATP = dTMP + ADP + H(+). In terms of biological role, catalyzes the transfer of the gamma-phospho group of ATP to thymidine to generate dTMP in the salvage pathway of pyrimidine synthesis. The dTMP serves as a substrate for DNA polymerase during viral DNA replication. Allows the virus to be reactivated and to grow in non-proliferative cells lacking a high concentration of phosphorylated nucleic acid precursors. This is Thymidine kinase from Varicella-zoster virus (strain Oka vaccine) (HHV-3).